Here is a 442-residue protein sequence, read N- to C-terminus: Tyrosine--tRNA ligase (442 aa).

Residue Y55 coordinates L-tyrosine. The short motif at 60–69 (PTAPSLHLGN) is the 'HIGH' region element. Residues Y190 and Q194 each contribute to the L-tyrosine site. A 'KMSKS' region motif is present at residues 250–254 (KFGKS). K253 contacts ATP. The S4 RNA-binding domain occupies 373 to 438 (VAIAQALVDT…GKKTLAGVFV (66 aa)).

Belongs to the class-I aminoacyl-tRNA synthetase family. TyrS type 1 subfamily. Homodimer.

Its subcellular location is the cytoplasm. The enzyme catalyses tRNA(Tyr) + L-tyrosine + ATP = L-tyrosyl-tRNA(Tyr) + AMP + diphosphate + H(+). In terms of biological role, catalyzes the attachment of tyrosine to tRNA(Tyr) in a two-step reaction: tyrosine is first activated by ATP to form Tyr-AMP and then transferred to the acceptor end of tRNA(Tyr). This is Tyrosine--tRNA ligase from Leifsonia xyli subsp. xyli (strain CTCB07).